The primary structure comprises 275 residues: MAVIKCKPTSPGRRHVVKVVNSDLHKGKPFAGLLAKKSKSGGRNNTGRITSRHIGGGHKQHYRLIDFKRNKDGIPAKVERLEYDPNRTANIALVLYADGERRYIIAAKGMKAGDSIQSGIDAEIKSGNAMPLRNIPVGSVVHAVEMKPGKGAQIARSAGAYVQVIARDGAYATLRLRSGEMRKVPVDCRATLGEVGNAEHMLRQLGKAGAKRWRGVRPTVRGVAMNPVDHPHGGGEGRTSGGRHPVSPWGQPTKGYKTRSNKRTDKYIVRRRNKK.

The segment at 223-275 is disordered; the sequence is VAMNPVDHPHGGGEGRTSGGRHPVSPWGQPTKGYKTRSNKRTDKYIVRRRNKK.

The protein belongs to the universal ribosomal protein uL2 family. In terms of assembly, part of the 50S ribosomal subunit. Forms a bridge to the 30S subunit in the 70S ribosome.

One of the primary rRNA binding proteins. Required for association of the 30S and 50S subunits to form the 70S ribosome, for tRNA binding and peptide bond formation. It has been suggested to have peptidyltransferase activity; this is somewhat controversial. Makes several contacts with the 16S rRNA in the 70S ribosome. This is Large ribosomal subunit protein uL2 from Shewanella piezotolerans (strain WP3 / JCM 13877).